Here is a 100-residue protein sequence, read N- to C-terminus: Mitochondrial zinc maintenance protein 1, mitochondrial (100 aa).

Belongs to the complex I LYR family. MZM1 subfamily. As to quaternary structure, interacts with RIP1.

Its subcellular location is the mitochondrion matrix. Assembly factor required for Rieske Fe-S protein RIP1 incorporation into the cytochrome b-c1 (CIII) complex. Functions as a chaperone, binding to this subunit within the mitochondrial matrix and stabilizing it prior to its translocation and insertion into the late CIII dimeric intermediate within the mitochondrial inner membrane. Modulates the mitochondrial matrix zinc pool. This Schizosaccharomyces pombe (strain 972 / ATCC 24843) (Fission yeast) protein is Mitochondrial zinc maintenance protein 1, mitochondrial (new18).